A 262-amino-acid polypeptide reads, in one-letter code: Troponin T, slow skeletal muscle (262 aa).

The segment covering 1 to 31 (MSDAEEQEYEEEQPEEEEAAEEEEAPEEPEP) has biased composition (acidic residues). Disordered regions lie at residues 1–59 (MSDA…PEGE), 107–153 (RAER…KKKV), and 165–197 (LVKA…NIDH). At serine 2 the chain carries Phosphoserine; by CK2. The segment covering 32 to 41 (VAEREEERPK) has biased composition (basic and acidic residues). Over residues 43–55 (SRPVVPPLIPPKI) the composition is skewed to pro residues. Basic and acidic residues-rich tracts occupy residues 107–149 (RAER…DDAK) and 177–197 (TGRE…NIDH).

The protein belongs to the troponin T family. Interacts with TPM3.

Troponin T is the tropomyosin-binding subunit of troponin, the thin filament regulatory complex which confers calcium-sensitivity to striated muscle actomyosin ATPase activity. The protein is Troponin T, slow skeletal muscle (TNNT1) of Sus scrofa (Pig).